Reading from the N-terminus, the 208-residue chain is Ribonuclease HII (208 aa).

The RNase H type-2 domain maps to 17-208; the sequence is LRVCGIDEAG…SFRLRQLGEK (192 aa). A divalent metal cation contacts are provided by aspartate 23, glutamate 24, and aspartate 120.

Belongs to the RNase HII family. It depends on Mn(2+) as a cofactor. Requires Mg(2+) as cofactor.

The protein resides in the cytoplasm. The catalysed reaction is Endonucleolytic cleavage to 5'-phosphomonoester.. In terms of biological role, endonuclease that specifically degrades the RNA of RNA-DNA hybrids. This chain is Ribonuclease HII, found in Chlorobium luteolum (strain DSM 273 / BCRC 81028 / 2530) (Pelodictyon luteolum).